A 339-amino-acid chain; its full sequence is tRNA N6-adenosine threonylcarbamoyltransferase (339 aa).

Fe cation-binding residues include histidine 111 and histidine 115. Substrate-binding positions include 134 to 138, aspartate 167, glycine 180, and asparagine 274; that span reads LVSGG. Aspartate 302 is a binding site for Fe cation.

The protein belongs to the KAE1 / TsaD family. Requires Fe(2+) as cofactor.

It localises to the cytoplasm. The catalysed reaction is L-threonylcarbamoyladenylate + adenosine(37) in tRNA = N(6)-L-threonylcarbamoyladenosine(37) in tRNA + AMP + H(+). Required for the formation of a threonylcarbamoyl group on adenosine at position 37 (t(6)A37) in tRNAs that read codons beginning with adenine. Is involved in the transfer of the threonylcarbamoyl moiety of threonylcarbamoyl-AMP (TC-AMP) to the N6 group of A37, together with TsaE and TsaB. TsaD likely plays a direct catalytic role in this reaction. In Methylobacillus flagellatus (strain ATCC 51484 / DSM 6875 / VKM B-1610 / KT), this protein is tRNA N6-adenosine threonylcarbamoyltransferase.